A 236-amino-acid chain; its full sequence is Phosphoribosylaminoimidazole-succinocarboxamide synthase (236 aa).

It belongs to the SAICAR synthetase family.

It catalyses the reaction 5-amino-1-(5-phospho-D-ribosyl)imidazole-4-carboxylate + L-aspartate + ATP = (2S)-2-[5-amino-1-(5-phospho-beta-D-ribosyl)imidazole-4-carboxamido]succinate + ADP + phosphate + 2 H(+). It participates in purine metabolism; IMP biosynthesis via de novo pathway; 5-amino-1-(5-phospho-D-ribosyl)imidazole-4-carboxamide from 5-amino-1-(5-phospho-D-ribosyl)imidazole-4-carboxylate: step 1/2. The protein is Phosphoribosylaminoimidazole-succinocarboxamide synthase of Campylobacter curvus (strain 525.92).